A 316-amino-acid chain; its full sequence is Pantothenate kinase (316 aa).

95–102 (GSVAVGKS) contacts ATP.

Belongs to the prokaryotic pantothenate kinase family.

It is found in the cytoplasm. The enzyme catalyses (R)-pantothenate + ATP = (R)-4'-phosphopantothenate + ADP + H(+). The protein operates within cofactor biosynthesis; coenzyme A biosynthesis; CoA from (R)-pantothenate: step 1/5. In Sodalis glossinidius (strain morsitans), this protein is Pantothenate kinase.